Reading from the N-terminus, the 159-residue chain is 2-C-methyl-D-erythritol 2,4-cyclodiphosphate synthase (159 aa).

A divalent metal cation contacts are provided by Asp-10 and His-12. Residues 10–12 (DVH) and 37–38 (HS) each bind 4-CDP-2-C-methyl-D-erythritol 2-phosphate. His-45 contributes to the a divalent metal cation binding site. 4-CDP-2-C-methyl-D-erythritol 2-phosphate-binding positions include 59-61 (DIG), 64-68 (FPDTD), 103-109 (AQAPKML), 135-138 (TTTE), Phe-142, and Arg-145.

This sequence belongs to the IspF family. As to quaternary structure, homotrimer. A divalent metal cation is required as a cofactor.

The catalysed reaction is 4-CDP-2-C-methyl-D-erythritol 2-phosphate = 2-C-methyl-D-erythritol 2,4-cyclic diphosphate + CMP. Its pathway is isoprenoid biosynthesis; isopentenyl diphosphate biosynthesis via DXP pathway; isopentenyl diphosphate from 1-deoxy-D-xylulose 5-phosphate: step 4/6. Its function is as follows. Involved in the biosynthesis of isopentenyl diphosphate (IPP) and dimethylallyl diphosphate (DMAPP), two major building blocks of isoprenoid compounds. Catalyzes the conversion of 4-diphosphocytidyl-2-C-methyl-D-erythritol 2-phosphate (CDP-ME2P) to 2-C-methyl-D-erythritol 2,4-cyclodiphosphate (ME-CPP) with a corresponding release of cytidine 5-monophosphate (CMP). The polypeptide is 2-C-methyl-D-erythritol 2,4-cyclodiphosphate synthase (Francisella philomiragia subsp. philomiragia (strain ATCC 25017 / CCUG 19701 / FSC 153 / O#319-036)).